The sequence spans 243 residues: Phomoidride biosynthesis cluster protein B (243 aa).

This sequence belongs to the tstB family.

Its function is as follows. Phosphatidylethanolamine-binding protein; part of the gene cluster that mediates the biosynthesis of the antihypercholesterolemic agents phomoidrides which are dimeric anhydrides. Within the pathway, tstB is not essential for dimerization and its function has still to be determined. The pathway begins with the highly reducing polyketide synthase tstA that catalyzes the formation of a C12-fatty acyl-ACP, starting from one acetate and 5 malonate units. The hydrolase tstM is involved in the release of the C12-fatty acyl chain from phiA. The alkylcitrate synthase (ACS) tstJ and the alkylcitrate dehydratase (ACDH) tstI then give rise to decarboxylated monomeric anhydrides by coupling the C12-fatty acyl chain with oxalacetic acid. The cyclase tstC is responsible for the dimerization of the monomeric anhydrides which leads to the production of prephomoidride that contains the characteristic bicyclo[4.3.1]deca-1,6-diene system of phomoidrides. Iterative oxidation catalyzed by the alpha-ketoglutarate-dependent dioxygenase tstK produced then phomoidride A. Finally, the methyltransferase tstE converts phomoidride A to phomoidride B via an acetalization reaction. The phosphatidylethanolamine-binding protein tstB and tstN are not essential for dimerization and their functions have still to be determined. The sequence is that of Phomoidride biosynthesis cluster protein B from Talaromyces stipitatus (strain ATCC 10500 / CBS 375.48 / QM 6759 / NRRL 1006) (Penicillium stipitatum).